The chain runs to 249 residues: Probable septum site-determining protein MinC (249 aa).

A disordered region spans residues 115–141; sequence KPAQEAPAQAEPEAAAAPEPANEPAPA. The segment covering 118–141 has biased composition (low complexity); the sequence is QEAPAQAEPEAAAAPEPANEPAPA.

This sequence belongs to the MinC family. In terms of assembly, interacts with MinD and FtsZ.

Its function is as follows. Cell division inhibitor that blocks the formation of polar Z ring septums. Rapidly oscillates between the poles of the cell to destabilize FtsZ filaments that have formed before they mature into polar Z rings. Prevents FtsZ polymerization. The sequence is that of Probable septum site-determining protein MinC from Marinobacter nauticus (strain ATCC 700491 / DSM 11845 / VT8) (Marinobacter aquaeolei).